The sequence spans 195 residues: Ephrin-A2 (195 aa).

The first 16 residues, 1–16, serve as a signal peptide directing secretion; it reads MELSLVVFTVVCWVSV. In terms of domain architecture, Ephrin RBD spans 24-157; sequence SDRHAVYWNS…KLKVYVKPTS (134 aa). N-linked (GlcNAc...) asparagine glycosylation is present at Asn32. Cystine bridges form between Cys57–Cys97 and Cys85–Cys146. Residue Cys174 is the site of GPI-anchor amidated cysteine attachment. A propeptide spans 175–195 (removed in mature form); it reads GADGPCLAVLMLLLVFLLAGV.

The protein belongs to the ephrin family. In terms of assembly, binds to the receptor tyrosine kinases epha2, epha3, epha4 and epha5. Interacts with epha8; activates epha8. In terms of tissue distribution, widespread expression in the embryo.

The protein localises to the cell membrane. Its function is as follows. Cell surface GPI-bound ligand for Eph receptors, a family of receptor tyrosine kinases which are crucial for migration, repulsion and adhesion during neuronal, vascular and epithelial development. Binds promiscuously Eph receptors residing on adjacent cells, leading to contact-dependent bidirectional signaling into neighboring cells. The signaling pathway downstream of the receptor is referred to as forward signaling while the signaling pathway downstream of the ephrin ligand is referred to as reverse signaling. With the epha2 receptor may play a role in bone remodeling through regulation of osteoclastogenesis and osteoblastogenesis. The sequence is that of Ephrin-A2 (efna2) from Danio rerio (Zebrafish).